Consider the following 174-residue polypeptide: Small ribosomal subunit protein uS5 (174 aa).

Residues 19–82 (LREKMVAINR…DEARRKLKKI (64 aa)) form the S5 DRBM domain.

It belongs to the universal ribosomal protein uS5 family. Part of the 30S ribosomal subunit. Contacts proteins S4 and S8.

In terms of biological role, with S4 and S12 plays an important role in translational accuracy. Located at the back of the 30S subunit body where it stabilizes the conformation of the head with respect to the body. This Aromatoleum aromaticum (strain DSM 19018 / LMG 30748 / EbN1) (Azoarcus sp. (strain EbN1)) protein is Small ribosomal subunit protein uS5.